Reading from the N-terminus, the 1469-residue chain is ATP-binding cassette transporter abc4 (1469 aa).

8 helical membrane passes run 21–40 (SLYY…FPTH), 55–74 (YSLE…RWIT), 94–114 (HGIL…FMFV), 121–141 (AFSD…LFLL), 160–180 (VLLN…PFFF), 189–209 (YSPF…IPLF), 296–316 (ILGM…SPIA), and 337–357 (WIVL…FYLF). The 285-residue stretch at 296–580 (ILGMGVSSFM…IAYLMRQIVQ (285 aa)) folds into the ABC transmembrane type-1 1 domain. N386 carries an N-linked (GlcNAc...) asparagine glycan. 2 consecutive transmembrane segments (helical) span residues 412–432 (EFIH…YLLQ) and 441–461 (VGLA…PLVA). N-linked (GlcNAc...) asparagine glycosylation is present at N510. Helical transmembrane passes span 524–544 (VLVE…FTTI) and 553–573 (IAFT…WIAY). Residues 611 to 840 (IGFFNASLTW…LAEQAASASE (230 aa)) enclose the ABC transporter 1 domain. N-linked (GlcNAc...) asparagine glycosylation occurs at N615. Residue 648–655 (GPTGSGKS) coordinates ATP. N691, N790, and N815 each carry an N-linked (GlcNAc...) asparagine glycan. The chain crosses the membrane as a helical span at residues 894 to 914 (GFYVAAVLLFFVTTQATSILI). In terms of domain architecture, ABC transmembrane type-1 2 spans 897-1176 (VAAVLLFFVT…FVRSCNSLQA (280 aa)). N923 carries N-linked (GlcNAc...) asparagine glycosylation. A helical membrane pass occupies residues 936–956 (FLFVYGTMLLAYSLLDFLRTV). N1007 carries N-linked (GlcNAc...) asparagine glycosylation. 5 consecutive transmembrane segments (helical) span residues 1009–1029 (SGWL…ILSV), 1033–1053 (MPIF…FGLL), 1065–1085 (ISIY…GVSV), 1120–1140 (VAVR…LIAL), and 1148–1168 (GVVG…LLFV). Residues 1214–1453 (FNHVSVSYSA…NGHFRRMCDG (240 aa)) form the ABC transporter 2 domain. 1246–1253 (GRTGSGKS) lines the ATP pocket. The N-linked (GlcNAc...) asparagine glycan is linked to N1355.

This sequence belongs to the ABC transporter superfamily. ABCC family. Conjugate transporter (TC 3.A.1.208) subfamily.

The protein resides in the vacuole membrane. It carries out the reaction ATP + H2O + xenobioticSide 1 = ADP + phosphate + xenobioticSide 2.. Involved in detoxification of xenobiotics, and vacuolar sequestration of glutathione S-conjugates. Together with abc2, required for accumulation of a red pigment (ade pigment) in the vacuole of a mutant affected in the adenine biosynthetic pathway. The protein is ATP-binding cassette transporter abc4 of Schizosaccharomyces pombe (strain 972 / ATCC 24843) (Fission yeast).